The following is a 72-amino-acid chain: MEKSFYRYLLRFRHGYEEDPVVRFANGAYDDHGFPKGSADYEELSGYLELNGDYLESMVIFDELWEQFLHET.

Belongs to the UPF0346 family.

This Geobacillus thermodenitrificans (strain NG80-2) protein is UPF0346 protein GTNG_1419.